We begin with the raw amino-acid sequence, 961 residues long: Vitamin B12-dependent ribonucleotide reductase (961 aa).

Positions 1-23 (MTETTSGPARGSRTKGTKATKGL) are disordered. Substrate is bound by residues Ser-143, 159–160 (AC), Gly-188, 364–368 (NPCSE), and 554–558 (PTGTI). The cysteines at positions 160 and 377 are disulfide-linked. The Proton acceptor role is filled by Asn-364. The active-site Cysteine radical intermediate is Cys-366. Glu-368 serves as the catalytic Proton acceptor.

It belongs to the ribonucleoside diphosphate reductase class-2 family. In terms of assembly, homotetramer. The cofactor is adenosylcob(III)alamin.

The enzyme catalyses a 2'-deoxyribonucleoside 5'-diphosphate + [thioredoxin]-disulfide + H2O = a ribonucleoside 5'-diphosphate + [thioredoxin]-dithiol. Its function is as follows. Catalyzes the reduction of ribonucleotides to deoxyribonucleotides. May function to provide a pool of deoxyribonucleotide precursors for DNA repair during oxygen limitation and/or for immediate growth after restoration of oxygen. This chain is Vitamin B12-dependent ribonucleotide reductase (nrdJ), found in Streptomyces clavuligerus.